A 134-amino-acid chain; its full sequence is Small ribosomal subunit protein uS11 (134 aa).

Disordered regions lie at residues 1-22 and 114-134; these read MPPK…KNVA and SIQD…RRRV. Residues 9–22 are compositionally biased toward basic residues; sequence AAKKVRRKEKKNVA.

This sequence belongs to the universal ribosomal protein uS11 family. Part of the 30S ribosomal subunit. Interacts with proteins S7 and S18. Binds to IF-3.

Functionally, located on the platform of the 30S subunit, it bridges several disparate RNA helices of the 16S rRNA. Forms part of the Shine-Dalgarno cleft in the 70S ribosome. The polypeptide is Small ribosomal subunit protein uS11 (Streptomyces avermitilis (strain ATCC 31267 / DSM 46492 / JCM 5070 / NBRC 14893 / NCIMB 12804 / NRRL 8165 / MA-4680)).